Consider the following 140-residue polypeptide: 3-hydroxyacyl-[acyl-carrier-protein] dehydratase FabZ (140 aa).

The active site involves His47.

Belongs to the thioester dehydratase family. FabZ subfamily.

The protein localises to the cytoplasm. It catalyses the reaction a (3R)-hydroxyacyl-[ACP] = a (2E)-enoyl-[ACP] + H2O. Functionally, involved in unsaturated fatty acids biosynthesis. Catalyzes the dehydration of short chain beta-hydroxyacyl-ACPs and long chain saturated and unsaturated beta-hydroxyacyl-ACPs. In Streptococcus pneumoniae (strain CGSP14), this protein is 3-hydroxyacyl-[acyl-carrier-protein] dehydratase FabZ.